We begin with the raw amino-acid sequence, 247 residues long: Probable transcriptional regulatory protein plu2109 (247 aa).

The protein belongs to the TACO1 family.

It is found in the cytoplasm. This chain is Probable transcriptional regulatory protein plu2109, found in Photorhabdus laumondii subsp. laumondii (strain DSM 15139 / CIP 105565 / TT01) (Photorhabdus luminescens subsp. laumondii).